A 395-amino-acid polypeptide reads, in one-letter code: Syncephapepsin (395 aa).

The signal sequence occupies residues 1–19 (MKFSLALLATVALATISQA). A propeptide spans 20-71 (APVEKQVAGKPFQLVKNPHYQANATRAIFRAEKKYARHTAIPEQGKTIVKSA) (activation peptide). One can recognise a Peptidase A1 domain in the interval 89–391 (YYATVSVGTP…NQGVPEVQIA (303 aa)). Residue aspartate 107 is part of the active site. Cysteine 120 and cysteine 123 are disulfide-bonded. Residue aspartate 288 is part of the active site. Cysteine 322 and cysteine 355 are disulfide-bonded.

It belongs to the peptidase A1 family. Monomer.

Hydrolysis of proteins with a broad specificity. Residues recognized to be cleaved were primarily those of trypsin and chymotrypsin and Lys was the most susceptible. The polypeptide is Syncephapepsin (SPSR) (Syncephalastrum racemosum (Filamentous fungus)).